Reading from the N-terminus, the 321-residue chain is Torsin-2A (321 aa).

Positions Met-1–Ala-27 are cleaved as a signal peptide. Gly-93–Ser-100 is an ATP binding site. Asn-149 carries an N-linked (GlcNAc...) asparagine glycan.

It belongs to the ClpA/ClpB family. Torsin subfamily. As to quaternary structure, homohexamer. Interacts with TOR1AIP1.

It is found in the endoplasmic reticulum lumen. The protein is Torsin-2A (Tor2a) of Rattus norvegicus (Rat).